A 105-amino-acid polypeptide reads, in one-letter code: Met repressor (105 aa).

Belongs to the MetJ family. Homodimer.

The protein resides in the cytoplasm. This regulatory protein, when combined with SAM (S-adenosylmethionine) represses the expression of the methionine regulon and of enzymes involved in SAM synthesis. The protein is Met repressor of Actinobacillus succinogenes (strain ATCC 55618 / DSM 22257 / CCUG 43843 / 130Z).